The primary structure comprises 1082 residues: CRISPR-associated endonuclease Cas9 (1082 aa).

The active-site For RuvC-like nuclease domain is Asp-16. 3 residues coordinate Mg(2+): Asp-16, Glu-504, and Glu-508. The 156-residue stretch at 512 to 667 folds into the HNH Cas9-type domain; it reads SFKDRKEIEK…DEDGFKERNL (156 aa). His-588 serves as the catalytic Proton acceptor for HNH nuclease domain. A Mg(2+)-binding site is contributed by His-723.

The protein belongs to the CRISPR-associated protein Cas9 family. Subtype II-C subfamily. In terms of assembly, monomer. Binds crRNA and tracrRNA. It depends on Mg(2+) as a cofactor.

Functionally, CRISPR (clustered regularly interspaced short palindromic repeat) is an adaptive immune system that provides protection against mobile genetic elements (viruses, transposable elements and conjugative plasmids). CRISPR clusters contain spacers, sequences complementary to antecedent mobile elements, and target invading nucleic acids. CRISPR clusters are transcribed and processed into CRISPR RNA (crRNA). In type II CRISPR systems correct processing of pre-crRNA requires a trans-encoded small RNA (tracrRNA), endogenous ribonuclease 3 (rnc) and this protein. The tracrRNA serves as a guide for ribonuclease 3-aided processing of pre-crRNA. Subsequently Cas9/crRNA/tracrRNA endonucleolytically cleaves linear or circular dsDNA target complementary to the spacer; Cas9 is inactive in the absence of the 2 guide RNAs (gRNA). Cas9 recognizes the protospacer adjacent motif (PAM) in the CRISPR repeat sequences to help distinguish self versus nonself, as targets within the bacterial CRISPR locus do not have PAMs. PAM recognition is also required for catalytic activity. Cuts target DNA in Cas9:gRNAs mixing experiments with C.jejuni strain NCTC 11168 and P.multocoda strain Pm70. In Neisseria meningitidis serogroup A / serotype 4A (strain DSM 15465 / Z2491), this protein is CRISPR-associated endonuclease Cas9.